The chain runs to 547 residues: MSPLDDVVSPSQWMLWRLTGAALVVTLITSVIIVAADLYRHWQKRRSVGQIPLIHDGSWLSPKLQWRRPSFDAESEMARAYKKYSKNGKPFAWKTQNGLDIVIILPPECGKEYYSLPREKCSFMHWVRNEMFLNTVVDVTWRVPVEAVQVSSQSAPMDRLGRVIFDHLDRVLPLFLPGPGDHEWRQVNGSDMMDSLVRDLALGLFFTPGFGEESGLRRQMSAYMDGLAGQWFARQEAPYILEHLVWRLSPTCRRFQSTIQTVRQIVVPEVRRRIQQIRSNDKDGCFLLSDLLIKQALKRGTFCREGKTGEQETLEELIVDEIMFMYMETVAPFHLVTTCMVFRIMRHPEYVAPLREELDRALKICGGEWSFEIFNHTPKMESFTREILRLHNPTSISGARCVMEPITIPSLGMALERGTHISLPSRFIHTDPENYPDPMTFNGYRFYDEASGTCNVQKTLAPSEAWLPFGIGTSACPARLLGTRTCQALFAKILMDYDVGQMDDKHVPLQMWLLGIYVPSPTISISARRRDARRTHEALGSKLKPEE.

Residues 18-38 traverse the membrane as a helical segment; it reads LTGAALVVTLITSVIIVAADL. Residue cysteine 476 participates in heme binding. The tract at residues 528-547 is disordered; that stretch reads RRRDARRTHEALGSKLKPEE. The span at 534–547 shows a compositional bias: basic and acidic residues; that stretch reads RTHEALGSKLKPEE.

It belongs to the cytochrome P450 family. Heme serves as cofactor.

It is found in the membrane. The catalysed reaction is campesine B + campesine C + reduced [NADPH--hemoprotein reductase] + O2 = campesine D + oxidized [NADPH--hemoprotein reductase] + 2 H2O + 2 H(+). The enzyme catalyses 2 campesine B + reduced [NADPH--hemoprotein reductase] + O2 = campesine F + oxidized [NADPH--hemoprotein reductase] + 2 H2O + H(+). It carries out the reaction campesine C + campesine A + reduced [NADPH--hemoprotein reductase] + O2 = campesine E + oxidized [NADPH--hemoprotein reductase] + 2 H2O + 2 H(+). The protein operates within alkaloid biosynthesis. In terms of biological role, cytochrome P450 monooxygenase; part of the gene cluster that mediates the biosynthesis of campesine G, a dimeric indole piperazine alkaloid that shows good insecticidal activity Galleria mellonella. Within the pathway, cpsD acts as a dimerase that simultaneously catalyzes one C-C bond (C3-C3') and two C-N bonds (C2-N16' and C2'-N16) coupling reactions between campesines B and C to produce a heterodimer with unexpected 6/5/6/6/6/6/5/6 eight-ring scaffold called campesine D. CpsD is also able to catalyze oxidative heterocoupling od campesines A with B to produce campesine F and campesines A with C to produce campesine E. The non-canonical non-ribosomal peptide synthetase cpsA catalyzes the first steps of the pathway by producing L-tryptophanal and L-valinal from their respective amino-acids. These products condensate spontaneously to form trypyl-valyl pyrazine also known as didehydrocampesine A. The NmrA-like family domain-containing oxidoreductase cpsB is the next enzyme in cps pathway and reduces the unstable didehydrocampesine A to campesine A. The methyltransferase cpsF and the acetyltransferase cpsE both recognize N13 of piperazine ring to carry out methylation and acetylation of campesine A to produce campesine C and B, respectively. The cytochrome P450 monooxygenase cpsD then acts as a dimerase that catalyzes oxidative heterocoupling between campesine B and C to produce heterodimers with unexpected 6/5/6/6/6/6/5/6 eight-ring scaffold called campesine D. Finally,the cytochrome P450 monooxygenase cpsC is a regioselective dehydrogenase that catalyzes dehydrogenation reaction towards C2-N1 to produce campesine G. The polypeptide is Cytochrome P450 monooxygenase cpsD (Aspergillus campestris (strain IBT 28561)).